We begin with the raw amino-acid sequence, 594 residues long: Probable ABC transporter-binding protein DR_1571 (594 aa).

A signal peptide spans 1 to 18 (MKKVMMLALALGASTSLA).

This sequence belongs to the bacterial solute-binding protein 5 family.

Probably part of a binding-protein-dependent transport system. The sequence is that of Probable ABC transporter-binding protein DR_1571 from Deinococcus radiodurans (strain ATCC 13939 / DSM 20539 / JCM 16871 / CCUG 27074 / LMG 4051 / NBRC 15346 / NCIMB 9279 / VKM B-1422 / R1).